Reading from the N-terminus, the 456-residue chain is Ammonium transporter Amt2 (456 aa).

A run of 11 helical transmembrane segments spans residues 18-38 (LVWVLTVTFLIFFMHAGFAML), 61-81 (IGVIVFFLLGAAVSAIVAGLT), 109-129 (WLFGAVFAMTAATIVSGAVAG), 141-161 (ILIAGVIYPVVVGVTWAGGFL), 170-190 (AGGMIVHGMGGIAGLTAAWII), 211-231 (ITFAVLGTLILAFGWYGFNVG), 255-275 (VALVTTLGMAAGALGAGGVAF), 281-301 (VDTLYVANGVLAGLVGITAIA), 304-324 (IVWPGALVVGLLAGAQLPIVF), 339-359 (VFPVHGSAGVLGTLLYPVFAV), and 377-397 (VGVGVIAVWTFVATTAIFGGF).

It belongs to the ammonia transporter channel (TC 1.A.11.2) family. In terms of assembly, homotrimer. Interacts with both GlnK1 and GlnK2 after ammonium shock.

The protein resides in the cell membrane. Functionally, involved in the uptake of ammonium/ammonia (NH(4)(+)/NH(3)). Transport is electrogenic. The protein is Ammonium transporter Amt2 of Haloferax mediterranei (strain ATCC 33500 / DSM 1411 / JCM 8866 / NBRC 14739 / NCIMB 2177 / R-4) (Halobacterium mediterranei).